Reading from the N-terminus, the 914-residue chain is TRPM8 channel-associated factor 2 (914 aa).

A Peptidase M60 domain is found at 541–840 (DAWMSTGLNL…TYLQLQEAFG (300 aa)).

This sequence belongs to the TCAF family. As to quaternary structure, interacts with TRPM8 (via N-terminus and C-terminus domains); the interaction inhibits TRPM8 channel activity. Interacts with TRPV6.

It localises to the cell membrane. Negatively regulates the plasma membrane cation channel TRPM8 activity. Involved in the recruitment of TRPM8 to the cell surface. Promotes prostate cancer cell migration stimulation in a TRPM8-dependent manner. This is TRPM8 channel-associated factor 2 from Bos taurus (Bovine).